A 355-amino-acid chain; its full sequence is Peptide chain release factor 1 (355 aa).

An N5-methylglutamine modification is found at Gln233.

Belongs to the prokaryotic/mitochondrial release factor family. Post-translationally, methylated by PrmC. Methylation increases the termination efficiency of RF1.

It is found in the cytoplasm. In terms of biological role, peptide chain release factor 1 directs the termination of translation in response to the peptide chain termination codons UAG and UAA. The chain is Peptide chain release factor 1 from Bacillus anthracis.